Consider the following 183-residue polypeptide: Glutamyl-tRNA(Gln) amidotransferase subunit F, mitochondrial (183 aa).

Residues 1–23 (MSRMLNQIPRLITRSFRTSSVGY) constitute a mitochondrion transit peptide.

The protein belongs to the GatF family. Subunit of the heterotrimeric GatFAB amidotransferase (AdT) complex, composed of A, B and F subunits.

Its subcellular location is the mitochondrion inner membrane. The enzyme catalyses L-glutamyl-tRNA(Gln) + L-glutamine + ATP + H2O = L-glutaminyl-tRNA(Gln) + L-glutamate + ADP + phosphate + H(+). Its function is as follows. Allows the formation of correctly charged Gln-tRNA(Gln) through the transamidation of misacylated Glu-tRNA(Gln) in the mitochondria. The reaction takes place in the presence of glutamine and ATP through an activated gamma-phospho-Glu-tRNA(Gln). Required for proper protein synthesis within the mitochondrion. The chain is Glutamyl-tRNA(Gln) amidotransferase subunit F, mitochondrial from Debaryomyces hansenii (strain ATCC 36239 / CBS 767 / BCRC 21394 / JCM 1990 / NBRC 0083 / IGC 2968) (Yeast).